Here is a 689-residue protein sequence, read N- to C-terminus: Beta-adrenergic receptor kinase 1 (689 aa).

The interval Met-1–Asp-190 is N-terminal. An RGS domain is found at Thr-54–Cys-175. Residues Phe-191 to Phe-453 form the Protein kinase domain. ATP contacts are provided by residues Ile-197 to Val-205 and Lys-220. The active-site Proton acceptor is the Asp-317. The AGC-kinase C-terminal domain occupies Lys-454–Val-521. The PH domain maps to Asp-558–Arg-652. Positions Lys-665–Leu-689 are disordered. A Phosphoserine modification is found at Ser-670.

Belongs to the protein kinase superfamily. AGC Ser/Thr protein kinase family. GPRK subfamily. Interacts with the heterodimer formed by GNB1 and GNG2. Interacts with GIT1. Interacts with, and phosphorylates chemokine-stimulated CCR5. Interacts with ARRB1. Interacts with LPAR1 and LPAR2. Interacts with RALA in response to LPAR1 activation. ADRBK1 and RALA mutually inhibit each other's binding to LPAR1. Interacts with ADRB2.

It localises to the cytoplasm. The protein localises to the cell membrane. Its subcellular location is the postsynapse. The protein resides in the presynapse. The enzyme catalyses [beta-adrenergic receptor] + ATP = [beta-adrenergic receptor]-phosphate + ADP + H(+). With respect to regulation, in contrast to other AGC family kinases, the catalytic activity is solely regulated by the binding of substrates and ligands, not by phosphorylation of the kinase domain. Its function is as follows. Specifically phosphorylates the agonist-occupied form of the beta-adrenergic and closely related receptors, probably inducing a desensitization of them. Does not act on HTR1B/5-hydroxytryptamine 1B receptor. Key regulator of LPAR1 signaling. Competes with RALA for binding to LPAR1 thus affecting the signaling properties of the receptor. Desensitizes LPAR1 and LPAR2 in a phosphorylation-independent manner. Inhibits relaxation of airway smooth muscle in response to blue light. This is Beta-adrenergic receptor kinase 1 from Didelphis virginiana (North American opossum).